The following is a 282-amino-acid chain: Bifunctional protein FolD 2 (282 aa).

NADP(+)-binding positions include 164 to 166 (GRS) and Ser189.

It belongs to the tetrahydrofolate dehydrogenase/cyclohydrolase family. In terms of assembly, homodimer.

It carries out the reaction (6R)-5,10-methylene-5,6,7,8-tetrahydrofolate + NADP(+) = (6R)-5,10-methenyltetrahydrofolate + NADPH. The enzyme catalyses (6R)-5,10-methenyltetrahydrofolate + H2O = (6R)-10-formyltetrahydrofolate + H(+). Its pathway is one-carbon metabolism; tetrahydrofolate interconversion. Its function is as follows. Catalyzes the oxidation of 5,10-methylenetetrahydrofolate to 5,10-methenyltetrahydrofolate and then the hydrolysis of 5,10-methenyltetrahydrofolate to 10-formyltetrahydrofolate. In Lactobacillus johnsonii (strain CNCM I-12250 / La1 / NCC 533), this protein is Bifunctional protein FolD 2.